Consider the following 119-residue polypeptide: SGSCEVKTCWKAMPPFRKVGNVLKEKFDGATEVEQRKIGSTKVLVPKNSQFKPHTDEDLVYLDSSPDFCDHDLKNGVLGTSGRHCNKTSKAIDGCELMCCGRGFHTDEVEVVERCSCKF.

Ser1 carries the O-palmitoleoyl serine; by PORCN lipid modification. Disulfide bonds link Cys69–Cys100 and Cys85–Cys95. N-linked (GlcNAc...) asparagine glycosylation occurs at Asn86.

Belongs to the Wnt family. In terms of processing, palmitoleoylation is required for efficient binding to frizzled receptors. Depalmitoleoylation leads to Wnt signaling pathway inhibition.

It is found in the secreted. It localises to the extracellular space. The protein resides in the extracellular matrix. Functionally, ligand for members of the frizzled family of seven transmembrane receptors. Plays an important role in embryonic development. This chain is Protein Wnt-4 (WNT-4), found in Plestiodon skiltonianus (Western skink).